The chain runs to 266 residues: MLRFLVLATLVLYGHSTRDFPETNARVVGGTEARKNPWPSQISLQYLSGGKWYHTCGGTLIRQNWVMTAAHCVDRKMTFRVVAGEHNLSQNDGTEQRVSVQKIVVHPYWNSNNVAAGYDIALLRLAQRVTLNNYVQLGVLPAAGTILANNNPCYITGWGMTKTNGQLAQALQQAYLPSVDYATCSSSSYWGSTVKSTMVCAGGDGIRSGCQGDSGGPLHCLVNGKYAVHGVTSFVSSLGCNVSRKPTVFTRVSAYISWINNVIASN.

An N-terminal signal peptide occupies residues 1–16 (MLRFLVLATLVLYGHS). Positions 17 to 26 (TRDFPETNAR) are cleaved as a propeptide — activation peptide. The Peptidase S1 domain maps to 27-264 (VVGGTEARKN…YISWINNVIA (238 aa)). Cys56 and Cys72 are joined by a disulfide. His71 functions as the Charge relay system in the catalytic mechanism. Residues Glu85, Asn87, Gln90, and Glu95 each coordinate Ca(2+). A glycan (N-linked (GlcNAc...) asparagine) is linked at Asn87. Asp119 functions as the Charge relay system in the catalytic mechanism. 3 cysteine pairs are disulfide-bonded: Cys153–Cys220, Cys184–Cys200, and Cys210–Cys240. The Charge relay system role is filled by Ser214. Asn241 carries an N-linked (GlcNAc...) asparagine glycan.

Belongs to the peptidase S1 family. Elastase subfamily. Ca(2+) is required as a cofactor.

The protein resides in the secreted. It catalyses the reaction Hydrolysis of proteins, including elastin. Preferential cleavage: Ala-|-Xaa.. Its function is as follows. Serine proteases that hydrolyze many proteins in addition to elastin. This Felis catus (Cat) protein is Chymotrypsin-like elastase family member 1 (CELA1).